We begin with the raw amino-acid sequence, 336 residues long: MAAKSRSPKRGTSEKTPLVEKEAPYQPPTKGILSKLPASWVPYAQLIRLEQPHGNYMIYFPHIIGLMYASAIRPTELSVLGHRAAIFAIWTFLMRGAGCAWNDNVDQDFDRKTERCRHRPIARGAISTTQGHVFTLILTLLGFAAIQSLPIECTYVGVGTTVLSAIYPFGKRFTHFAQVILGSTLASTIALSAYSVGLPALSKDYFVPTLCLSATIMLLVVFYDVVYARADTTDDLKSGVKGMAVRFRNHLEGLFAFITLSIAGSLTTLGYLVGMGHWFYLFSVGGLTFGLVSMVALTHWNILPGYSSGRCYAFAILNLLTGFIMEYATKDYVVGV.

A disordered region spans residues 1-26 (MAAKSRSPKRGTSEKTPLVEKEAPYQ). The segment covering 11-23 (GTSEKTPLVEKEA) has biased composition (basic and acidic residues). Transmembrane regions (helical) follow at residues 52–72 (PHGNYMIYFPHIIGLMYASAI), 74–94 (PTELSVLGHRAAIFAIWTFLM), 131–151 (GHVFTLILTLLGFAAIQSLPI), 179–199 (VILGSTLASTIALSAYSVGLP), 206–226 (FVPTLCLSATIMLLVVFYDVV), 251–271 (LEGLFAFITLSIAGSLTTLGY), 272–292 (LVGMGHWFYLFSVGGLTFGLV), and 314–334 (FAILNLLTGFIMEYATKDYVV).

The protein belongs to the UbiA prenyltransferase family. Mg(2+) serves as cofactor.

It localises to the membrane. It catalyses the reaction orsellinate + (2E,6E)-farnesyl diphosphate = ilicicolinate B + diphosphate. Its pathway is secondary metabolite biosynthesis; terpenoid biosynthesis. Functionally, prenytransferase; part of the asc-1 gene cluster that mediates the biosynthesis of both ascochlorin and ascofuranone, a strong inhibitor of cyanide-insensitive alternative oxidases and a promising drug candidate against African trypanosomiasis. The first step in the pathway is performed by the non-reducing polyketide synthase ascC that produces orsellinic acid by condensing acetyl-CoA with 3 malonyl-CoA units. Orsellinic acid is then prenylated by the prenyltransferase ascA to yield ilicicolinic acid B. Ilicicolinic acid B is further reduced to ilicicolin B by the reductase ascB. The halogenase ascD then chlorinates ilicicolin B to produce ilicicolin A which is converted to ilicicolin A epoxide by the cytochrome P450 monooxygenase ascE that catalyzes stereoselective epoxidation of the terminal double bond of the prenyl group. Ilicicolin A epoxide is the last common precursor for the biosynthesis of ascofuranone and ascochlorin. The terpene cyclase ascF produces a monocyclic terpene, and the cyclization reaction is proposed to be initiated by protonation of the terminal epoxide of ilicicolin A epoxide to generate a monocyclic tertiarycation, which is followed by a series of hydride and methyl shifts with abstraction of proton, leading to the formation of the (14S,15R,19R)-trimethylcyclohexanone ring structure of ilicicolin C, which is finally reduced to ascochlorin by the dehydrogenase ascG. On the other hand, ilicicolin A epoxide is hydroxylated by the cytochrome P450 monooxygenase ascH, and the resultant product is cyclized by the terpene cyclase ascI to ascofuranol via protonation-initiated epoxide ring opening, which facilitates the 6-endo-tet cyclization to form the tetrahy-drofuran ring. Finally, ascofuranol is oxidized into ascofuranone by ascJ. This is Prenytransferase ascA from Acremonium egyptiacum (Oospora egyptiaca).